Consider the following 155-residue polypeptide: Small ribosomal subunit protein uS7 (155 aa).

The protein belongs to the universal ribosomal protein uS7 family. Part of the 30S ribosomal subunit. Contacts proteins S9 and S11.

One of the primary rRNA binding proteins, it binds directly to 16S rRNA where it nucleates assembly of the head domain of the 30S subunit. Is located at the subunit interface close to the decoding center, probably blocks exit of the E-site tRNA. This is Small ribosomal subunit protein uS7 from Pseudothermotoga lettingae (strain ATCC BAA-301 / DSM 14385 / NBRC 107922 / TMO) (Thermotoga lettingae).